The following is a 315-amino-acid chain: MSTNRRFDPNFTPYVVNSMGPKTPERARVVLGALIRHIHDFAREVELTSAEWMLGVEFINSIGKISTPIRNECHRICDVIGLESLVDEIANKIVTEDGVSPTSNVILGPFWSPNAPFRELGDSIIQDPNPNGKVTYMHGVLKDMETGAPIVGAVLDIWQASANGQYDFQDPNQSENNLRGKFRSNEKGEFNWYCYHPTPYSLPTDGPAGVLLNLMDRSPMRPAHIHLMITHPDYATVINQIYPSDDPHLDIDSVFAVKDDLVVDFKPKTDDPKAQLDLEYNVTMALKKHHPNPNSAPPVSSFERFNKASKTQEKL.

Tyr166, Tyr200, His224, and His226 together coordinate Fe cation. Positions 287 to 315 (KKHHPNPNSAPPVSSFERFNKASKTQEKL) are disordered. Over residues 304-315 (RFNKASKTQEKL) the composition is skewed to basic and acidic residues.

The protein belongs to the intradiol ring-cleavage dioxygenase family. In terms of assembly, homodimer. Fe(3+) serves as cofactor.

It carries out the reaction 3,4-dihydroxybenzoate + O2 = 3-carboxy-cis,cis-muconate + 2 H(+). Intradiol ring-cleavage dioxygenase; part of the benzoic acid degradation pathway also known as the protocatechuic acid pathway. Benzoic acid debradation begins with the conversion of benzoic acid into 4-hydroxybenzoic acid through hydroxylation by the benzoate-4-monooxygenase bphA, and its partner NADPH-cytochrome P450 reductase cprA which act as a mediator in electron donation from NADPH. 4-Hydroxybenzoic acid is then converted into 3,4-dihydroxybenzoic acid (also called protocatechuic acid) by the p-hydroxybenzoate-m-hydroxylase phhA. Protocatechuic acid is converted into 3-carboxy-cis,cis-muconic acid by the intradiol ring-cleavage dioxygenase prcA, which is further metabolized through the 3-oxoadipate pathway to finally enter the tricarboxylic acid cycle (TCA). The chain is Intradiol ring-cleavage dioxygenase prcA from Aspergillus niger (strain ATCC MYA-4892 / CBS 513.88 / FGSC A1513).